The sequence spans 368 residues: UDP-N-acetylglucosamine--N-acetylmuramyl-(pentapeptide) pyrophosphoryl-undecaprenol N-acetylglucosamine transferase (368 aa).

UDP-N-acetyl-alpha-D-glucosamine is bound by residues 10 to 12 (TGG), N126, S200, I255, and Q300.

It belongs to the glycosyltransferase 28 family. MurG subfamily.

The protein resides in the cell membrane. It catalyses the reaction Mur2Ac(oyl-L-Ala-gamma-D-Glu-L-Lys-D-Ala-D-Ala)-di-trans,octa-cis-undecaprenyl diphosphate + UDP-N-acetyl-alpha-D-glucosamine = beta-D-GlcNAc-(1-&gt;4)-Mur2Ac(oyl-L-Ala-gamma-D-Glu-L-Lys-D-Ala-D-Ala)-di-trans,octa-cis-undecaprenyl diphosphate + UDP + H(+). Its pathway is cell wall biogenesis; peptidoglycan biosynthesis. Its function is as follows. Cell wall formation. Catalyzes the transfer of a GlcNAc subunit on undecaprenyl-pyrophosphoryl-MurNAc-pentapeptide (lipid intermediate I) to form undecaprenyl-pyrophosphoryl-MurNAc-(pentapeptide)GlcNAc (lipid intermediate II). The polypeptide is UDP-N-acetylglucosamine--N-acetylmuramyl-(pentapeptide) pyrophosphoryl-undecaprenol N-acetylglucosamine transferase (Lactobacillus helveticus (strain DPC 4571)).